A 296-amino-acid polypeptide reads, in one-letter code: Galectin-3 (296 aa).

Over residues 1-11 (MADSFSLNDAL) the composition is skewed to polar residues. The segment at 1–150 (MADSFSLNDA…PSAPGAYPAA (150 aa)) is disordered. An N-acetylalanine modification is found at Ala-2. Residues Ser-6 and Ser-12 each carry the phosphoserine; by CK1 modification. 2 stretches are compositionally biased toward low complexity: residues 12 to 31 (SGSG…NQPA) and 38 to 47 (GASYPGAYPG). 8 repeat units span residues 36–44 (YPGASYPGA), 45–53 (YPGQAPPGG), 54–62 (YPGQAPPGG), 63–71 (YPGQAPPGG), 72–80 (YPGQAPPGG), 81–89 (YPGQAPPGG), 90–98 (YPGQAPPGG), and 99–107 (YPGQAPPGT). A 12 X 9 AA tandem repeats of Y-P-G-X(3)-P-G-[GAT] region spans residues 36 to 143 (YPGASYPGAY…AYPPPGQPSA (108 aa)). Positions 48-120 (QAPPGGYPGQ…PTAPAYPGPT (73 aa)) are enriched in pro residues. The 9; approximate repeat unit spans residues 108–115 (YPGPTAPA). Copy 10 of the repeat occupies 116-124 (YPGPTAPGT). Residues 121 to 133 (APGTQPGQPSGPG) are compositionally biased toward low complexity. An 11; approximate repeat occupies 125–134 (QPGQPSGPGA). One copy of the 12; approximate repeat lies at 135-143 (YPPPGQPSA). Positions 164 to 294 (YDLPLPGGVK…DIDLTSASYA (131 aa)) constitute a Galectin domain. Residue 227–233 (WGKEERQ) participates in a beta-D-galactoside binding. Positions 272–287 (KNLPEISKLGISGDID) match the Nuclear export signal motif.

Probably forms homo- or heterodimers. Interacts with DMBT1. Interacts with CD6 and ALCAM. Forms a complex with the ITGA3, ITGB1 and CSPG4. Interacts with LGALS3BP, LYPD3, ZFTRAF1 and UACA. Interacts with TRIM16; this interaction mediates autophagy of damage endomembranes. Interacts with cargo receptor TMED10; the interaction mediates the translocation from the cytoplasm into the ERGIC (endoplasmic reticulum-Golgi intermediate compartment) and thereby secretion. Interacts with and inhibits by binding NCR3/NKp30. In terms of processing, the degree of phosphorylation is higher in the cytoplasmic form than in the nuclear form. In protein isolated from a canine kidney cell line, 90% of the phosphate was on Ser-6 and 10% was on Ser-12.

Its subcellular location is the cytoplasm. It is found in the nucleus. It localises to the secreted. Galactose-specific lectin which binds IgE. May mediate with the alpha-3, beta-1 integrin the stimulation by CSPG4 of endothelial cells migration. Together with DMBT1, required for terminal differentiation of columnar epithelial cells during early embryogenesis. In the nucleus: acts as a pre-mRNA splicing factor. Involved in acute inflammatory responses including neutrophil activation and adhesion, chemoattraction of monocytes macrophages, opsonization of apoptotic neutrophils, and activation of mast cells. Together with TRIM16, coordinates the recognition of membrane damage with mobilization of the core autophagy regulators ATG16L1 and BECN1 in response to damaged endomembranes. When secreted, interacts with NK cell-activating receptor NCR3/NKp30 acting as an inhibitory ligand which antagonizes NK cell attack. The protein is Galectin-3 (LGALS3) of Canis lupus familiaris (Dog).